The chain runs to 455 residues: MSHGSNPRPATARKSSDLKGTLRIPGDKSISHRSFMFGGLAAGETRITGLLEGEDVINTGKAMQAMGARIRKEGDTWIIDGVGNGALLAPEAPLDFGNAGTGCRLTMGLVGVYDFDSTFIGDASLTKRPMGRVLDPLREMGVQVKSAEGDRLPVTLRGPKTPNPITYRVPMASAQVKSAVLLAGLNTPGITTVVEPVMTRDHTEKMLQGFGANLTVETDAEGVRTIRLEGRGKLTGQVIDVPGDPSSTAFPLVAGLIVPGSDITILNVLMNPTRTGLILTLQEMGANIEVMNKRLAGGEDVADLRVRHSELKGVTVPEDRAPSMIDEYPVLAVAAAFAEGTTVMNGLEELRVKESDRLSAVADGLKLNGVDCDEGEASLVVRGRPGGKGLGKISGGQVKTHLDHRIAMSFLVMGLASEHPVTVDDATMIATSFPEFMGLMTGLGAKIEEAENKAA.

Residues methionine 1–arginine 23 are disordered. Lysine 28, serine 29, and arginine 33 together coordinate 3-phosphoshikimate. Phosphoenolpyruvate is bound at residue lysine 28. The phosphoenolpyruvate site is built by glycine 100 and arginine 128. 4 residues coordinate 3-phosphoshikimate: serine 173, glutamine 175, aspartate 326, and lysine 353. Glutamine 175 provides a ligand contact to phosphoenolpyruvate. Residue aspartate 326 is the Proton acceptor of the active site. Phosphoenolpyruvate is bound by residues arginine 357 and arginine 405.

The protein belongs to the EPSP synthase family. In terms of assembly, monomer.

It is found in the cytoplasm. The enzyme catalyses 3-phosphoshikimate + phosphoenolpyruvate = 5-O-(1-carboxyvinyl)-3-phosphoshikimate + phosphate. It participates in metabolic intermediate biosynthesis; chorismate biosynthesis; chorismate from D-erythrose 4-phosphate and phosphoenolpyruvate: step 6/7. Catalyzes the transfer of the enolpyruvyl moiety of phosphoenolpyruvate (PEP) to the 5-hydroxyl of shikimate-3-phosphate (S3P) to produce enolpyruvyl shikimate-3-phosphate and inorganic phosphate. In Rhizobium meliloti (strain 1021) (Ensifer meliloti), this protein is 3-phosphoshikimate 1-carboxyvinyltransferase.